The primary structure comprises 321 residues: Lipoyl synthase (321 aa).

[4Fe-4S] cluster-binding residues include C68, C73, C79, C94, C98, C101, and S308. Residues F80–T297 form the Radical SAM core domain.

The protein belongs to the radical SAM superfamily. Lipoyl synthase family. [4Fe-4S] cluster is required as a cofactor.

Its subcellular location is the cytoplasm. It carries out the reaction [[Fe-S] cluster scaffold protein carrying a second [4Fe-4S](2+) cluster] + N(6)-octanoyl-L-lysyl-[protein] + 2 oxidized [2Fe-2S]-[ferredoxin] + 2 S-adenosyl-L-methionine + 4 H(+) = [[Fe-S] cluster scaffold protein] + N(6)-[(R)-dihydrolipoyl]-L-lysyl-[protein] + 4 Fe(3+) + 2 hydrogen sulfide + 2 5'-deoxyadenosine + 2 L-methionine + 2 reduced [2Fe-2S]-[ferredoxin]. The protein operates within protein modification; protein lipoylation via endogenous pathway; protein N(6)-(lipoyl)lysine from octanoyl-[acyl-carrier-protein]: step 2/2. In terms of biological role, catalyzes the radical-mediated insertion of two sulfur atoms into the C-6 and C-8 positions of the octanoyl moiety bound to the lipoyl domains of lipoate-dependent enzymes, thereby converting the octanoylated domains into lipoylated derivatives. The polypeptide is Lipoyl synthase (Erwinia tasmaniensis (strain DSM 17950 / CFBP 7177 / CIP 109463 / NCPPB 4357 / Et1/99)).